Reading from the N-terminus, the 132-residue chain is Large ribosomal subunit protein bL19 (132 aa).

It belongs to the bacterial ribosomal protein bL19 family.

Functionally, this protein is located at the 30S-50S ribosomal subunit interface and may play a role in the structure and function of the aminoacyl-tRNA binding site. The chain is Large ribosomal subunit protein bL19 from Nitrosomonas europaea (strain ATCC 19718 / CIP 103999 / KCTC 2705 / NBRC 14298).